Here is a 319-residue protein sequence, read N- to C-terminus: Coproporphyrin III ferrochelatase (319 aa).

Positions 193 and 274 each coordinate Fe(2+).

This sequence belongs to the ferrochelatase family.

It is found in the cytoplasm. It carries out the reaction Fe-coproporphyrin III + 2 H(+) = coproporphyrin III + Fe(2+). It functions in the pathway porphyrin-containing compound metabolism; protoheme biosynthesis. Functionally, involved in coproporphyrin-dependent heme b biosynthesis. Catalyzes the insertion of ferrous iron into coproporphyrin III to form Fe-coproporphyrin III. This chain is Coproporphyrin III ferrochelatase, found in Streptococcus mutans serotype c (strain ATCC 700610 / UA159).